The following is a 226-amino-acid chain: MEPIKNLPRLCRTLGYEFSDIRLLEQALTHRSASNQHNERLEFLGDSILSIVISDALFHQFPKATEGDLSRMRATLVRGDTLAVIAKEFKLGDYLNLGPGELKSGGFRRESILADAVEAIIGAVYLDADLETCRSLLLGWYETRLADIKPGVGQKDAKTLLQEYLQGMKKPLPEYQVTQVEGEAHDQTFTVECRVTDLADAVVGVGSSRRKAEQMAAAQVLELLNQ.

The 123-residue stretch at 7 to 129 folds into the RNase III domain; the sequence is LPRLCRTLGY…IIGAVYLDAD (123 aa). Glutamate 42 is a Mg(2+) binding site. Aspartate 46 is a catalytic residue. Positions 115 and 118 each coordinate Mg(2+). The active site involves glutamate 118. Residues 156-226 enclose the DRBM domain; it reads DAKTLLQEYL…AAQVLELLNQ (71 aa).

This sequence belongs to the ribonuclease III family. In terms of assembly, homodimer. Requires Mg(2+) as cofactor.

It is found in the cytoplasm. The catalysed reaction is Endonucleolytic cleavage to 5'-phosphomonoester.. In terms of biological role, digests double-stranded RNA. Involved in the processing of primary rRNA transcript to yield the immediate precursors to the large and small rRNAs (23S and 16S). Processes some mRNAs, and tRNAs when they are encoded in the rRNA operon. Processes pre-crRNA and tracrRNA of type II CRISPR loci if present in the organism. In Shewanella amazonensis (strain ATCC BAA-1098 / SB2B), this protein is Ribonuclease 3.